The primary structure comprises 190 residues: Probable thymidylate kinase (190 aa).

Position 9-16 (9-16 (GIDGAGKT)) interacts with ATP.

Belongs to the thymidylate kinase family.

It catalyses the reaction dTMP + ATP = dTDP + ADP. This chain is Probable thymidylate kinase (tmk1), found in Sulfurisphaera tokodaii (strain DSM 16993 / JCM 10545 / NBRC 100140 / 7) (Sulfolobus tokodaii).